We begin with the raw amino-acid sequence, 38 residues long: Large ribosomal subunit protein bL36 (38 aa).

It belongs to the bacterial ribosomal protein bL36 family.

This chain is Large ribosomal subunit protein bL36, found in Lacticaseibacillus casei (strain BL23) (Lactobacillus casei).